A 412-amino-acid polypeptide reads, in one-letter code: Isocitrate dehydrogenase [NADP] cytoplasmic (412 aa).

Residues 75-77 (TIT) and Arg82 each bind NADP(+). Thr77 is a binding site for substrate. Substrate contacts are provided by residues 94 to 100 (SPNGTIR), Arg109, and Arg132. Asp252 provides a ligand contact to Mn(2+). Residue Lys260 participates in NADP(+) binding. Asp275 is a binding site for Mn(2+). NADP(+)-binding positions include 310–315 (GTVTRH) and Asn328.

It belongs to the isocitrate and isopropylmalate dehydrogenases family. As to quaternary structure, homodimer. Requires Mg(2+) as cofactor. Mn(2+) serves as cofactor. In terms of processing, the N-terminus is blocked.

Its subcellular location is the cytoplasm. The enzyme catalyses D-threo-isocitrate + NADP(+) = 2-oxoglutarate + CO2 + NADPH. With respect to regulation, by catabolite repression. May function in the production of NADPH for fatty acid and sterol synthesis. In Saccharomyces cerevisiae (strain ATCC 204508 / S288c) (Baker's yeast), this protein is Isocitrate dehydrogenase [NADP] cytoplasmic (IDP2).